A 43-amino-acid polypeptide reads, in one-letter code: U5-hexatoxin-Mr1a (43 aa).

4 disulfides stabilise this stretch: cysteine 1–cysteine 16, cysteine 8–cysteine 21, cysteine 15–cysteine 36, and cysteine 17–cysteine 43.

Belongs to the neurotoxin 35 family. In terms of processing, contains 4 disulfide bonds. In terms of tissue distribution, expressed by the venom gland.

The protein localises to the secreted. In terms of biological role, this toxin blocks the neuromuscular transmission, and also acts on muscle. It exerts an effect of first exciting and then inhibiting the contraction of muscle. This toxin is active only against mammals. This Macrothele raveni (Funnel-web spider) protein is U5-hexatoxin-Mr1a.